The primary structure comprises 481 residues: Glutamate--cysteine ligase (481 aa).

The protein belongs to the glutamate--cysteine ligase type 1 family. Type 1 subfamily.

The enzyme catalyses L-cysteine + L-glutamate + ATP = gamma-L-glutamyl-L-cysteine + ADP + phosphate + H(+). It functions in the pathway sulfur metabolism; glutathione biosynthesis; glutathione from L-cysteine and L-glutamate: step 1/2. The chain is Glutamate--cysteine ligase from Clostridium acetobutylicum (strain ATCC 824 / DSM 792 / JCM 1419 / IAM 19013 / LMG 5710 / NBRC 13948 / NRRL B-527 / VKM B-1787 / 2291 / W).